A 198-amino-acid polypeptide reads, in one-letter code: Recombination protein RecR (198 aa).

Residues 57–72 form a C4-type zinc finger; the sequence is CSICGNLTDDDPCHIC. The Toprim domain maps to 80-175; that stretch reads EIILVVEDSK…KVTRLARGLA (96 aa).

Belongs to the RecR family.

In terms of biological role, may play a role in DNA repair. It seems to be involved in an RecBC-independent recombinational process of DNA repair. It may act with RecF and RecO. This is Recombination protein RecR from Streptococcus equi subsp. equi (strain 4047).